Here is a 1387-residue protein sequence, read N- to C-terminus: DNA-directed RNA polymerase subunit beta'' (1387 aa).

Zn(2+) contacts are provided by Cys220, Cys291, Cys298, and Cys301.

It belongs to the RNA polymerase beta' chain family. RpoC2 subfamily. As to quaternary structure, in plastids the minimal PEP RNA polymerase catalytic core is composed of four subunits: alpha, beta, beta', and beta''. When a (nuclear-encoded) sigma factor is associated with the core the holoenzyme is formed, which can initiate transcription. Zn(2+) is required as a cofactor.

Its subcellular location is the plastid. It is found in the chloroplast. The catalysed reaction is RNA(n) + a ribonucleoside 5'-triphosphate = RNA(n+1) + diphosphate. In terms of biological role, DNA-dependent RNA polymerase catalyzes the transcription of DNA into RNA using the four ribonucleoside triphosphates as substrates. The chain is DNA-directed RNA polymerase subunit beta'' from Carica papaya (Papaya).